We begin with the raw amino-acid sequence, 399 residues long: MTKKRHLFTSESVTEGHPDKICDQISDSILDAILSKDANARVACETTVTTGLVLVAGEITTSTYVDIPKIVRETIQGIGYTRAKYGFDAETCAVLTSIDEQSADIAMGVDQALEAREGQMTDAEIEAIGAGDQGLMFGFACNETQELMPLPISLAHKLARRLTEVRKDDTLSYLRPDGKTQVTVEYDENGKPVRVDTIVISTQHHPDVTWEEIDRDLKEHVIKAVVPAELMDGETKFFINPTGRFVIGGPQGDAGLTGRKIIVDTYGGYARHGGGAFSGKDATKVDRSAAYAARYVAKNIVAAGLAEKAEVQLAYAIGVAQPVSISVDTFGTGKVSEDVLVELVRNNFDLRPAGIIKMLDLRRPIYKQTAAYGHFGRTDVDLSWERTDKAAALKEQAGL.

His-17 lines the ATP pocket. Asp-19 is a binding site for Mg(2+). Position 45 (Glu-45) interacts with K(+). L-methionine is bound by residues Glu-58 and Gln-101. A flexible loop region spans residues Gln-101–Gln-111. Residues Asp-177–Lys-179, Arg-244–Phe-245, Asp-253, Arg-259–Lys-260, Ala-276, and Lys-280 each bind ATP. Asp-253 contributes to the L-methionine binding site. An L-methionine-binding site is contributed by Lys-284.

Belongs to the AdoMet synthase family. In terms of assembly, homotetramer; dimer of dimers. The cofactor is Mg(2+). K(+) serves as cofactor.

The protein localises to the cytoplasm. The enzyme catalyses L-methionine + ATP + H2O = S-adenosyl-L-methionine + phosphate + diphosphate. It participates in amino-acid biosynthesis; S-adenosyl-L-methionine biosynthesis; S-adenosyl-L-methionine from L-methionine: step 1/1. Functionally, catalyzes the formation of S-adenosylmethionine (AdoMet) from methionine and ATP. The overall synthetic reaction is composed of two sequential steps, AdoMet formation and the subsequent tripolyphosphate hydrolysis which occurs prior to release of AdoMet from the enzyme. This Bacillus cereus (strain B4264) protein is S-adenosylmethionine synthase.